Reading from the N-terminus, the 776-residue chain is Protein SEY1 (776 aa).

At 1 to 681 the chain is on the cytoplasmic side; it reads MADRSAIQLI…KRSIITTRTH (681 aa). The 230-residue stretch at 34–263 folds into the GB1/RHD3-type G domain; the sequence is GLDYHVISVF…TENYYFKPQY (230 aa). A GTP-binding site is contributed by 44 to 51; it reads GSQSSGKS. A helical transmembrane segment spans residues 682–702; it reads IPPWIYVLLAVLGWNEFVAVI. Residues 703–705 lie on the Lumenal side of the membrane; that stretch reads RNP. A helical transmembrane segment spans residues 706–726; that stretch reads LFVTLTLILGATFFVIHKFGL. At 727-776 the chain is on the cytoplasmic side; that stretch reads WGPVVNVVQSAVGETRTAIKDKLRQFVVEDHEVKESFEMKDFSKNEQKEK.

The protein belongs to the TRAFAC class dynamin-like GTPase superfamily. GB1/RHD3 GTPase family. RHD3 subfamily. Interacts with RTN1 and YOP1; GTP binding is not required for these interactions.

Its subcellular location is the endoplasmic reticulum membrane. Functionally, cooperates with the reticulon proteins RTN1 and RTN2 and the tubule-shaping DP1 family protein YOP1 to generate and maintain the structure of the tubular endoplasmic reticulum network. Has GTPase activity, which is required for its function in ER organization. This chain is Protein SEY1, found in Saccharomyces cerevisiae (strain YJM789) (Baker's yeast).